Consider the following 314-residue polypeptide: MSERKVLNKYYPPDFDPSKIPKLKLPKDRQYVVRLMAPFNMRCKTCGEYIYKGKKFNARKETVQNEAYLGLPIFRFYIKCTRCLAEITFKTDPENTDYTMEHGATRNFQAEKLLEEEEKRVQKEREDEELNNPMKVLENRTKDSKLEMEVLENLQELKDLNQRQAHVDFEAMLRQHRMSQEQWQQQQEEEDERETAALLEEARHRRLLEDSESEDEAPPSRPRAAARPNPTAILNEVPQTKRKAEALCSKAQLAGLVVPKKVKTEANGASEQVGVPTAAGAPKSRKADNPTPQTPGTSSLSQLGAYGDSEDSDS.

Positions 43, 46, 80, and 83 each coordinate Zn(2+). Disordered stretches follow at residues Met178–Pro238 and Leu253–Ser314. Positions Glu200–Glu209 are enriched in basic and acidic residues. 3 positions are modified to phosphoserine: Ser211, Ser213, and Ser220. The span at Pro222–Ala232 shows a compositional bias: low complexity. A compositionally biased stretch (polar residues) spans Pro290–Gln302. Phosphoserine is present on residues Ser309, Ser312, and Ser314.

It belongs to the CWC16 family. YJU2 subfamily. As to quaternary structure, component of the spliceosome. Present in the activated B complex, the catalytically activated B* complex which catalyzes the branching, the catalytic step 1 C complex catalyzing the exon ligation, and the postcatalytic P complex containing the ligated exons (mRNA) and the excised lariat intron.

The protein resides in the nucleus. Functionally, part of the spliceosome which catalyzes two sequential transesterification reactions, first the excision of the non-coding intron from pre-mRNA and then the ligation of the coding exons to form the mature mRNA. Plays a role in stabilizing the structure of the spliceosome catalytic core and docking of the branch helix into the active site, producing 5'-exon and lariat intron-3'-intermediates. May protect cells from TP53-dependent apoptosis upon dsDNA break damage through association with PRP19-CD5L complex. In Mus musculus (Mouse), this protein is Splicing factor YJU2.